A 1048-amino-acid chain; its full sequence is Anguibactin system regulator (1048 aa).

The 75-residue stretch at 965-1039 (PIITASEDRV…AFAIIMDRCR (75 aa)) folds into the Carrier domain.

This sequence belongs to the ATP-dependent AMP-binding enzyme family.

Its pathway is siderophore biosynthesis; anguibactin biosynthesis. Its function is as follows. Bifunctional protein that plays an essential role in virulence. Plays a role in both the production of the siderophore anguibactin and the regulation of iron transport genes. The protein is Anguibactin system regulator (angR) of Vibrio anguillarum (Listonella anguillarum).